The chain runs to 278 residues: Elongation factor Ts (278 aa).

The interval 82 to 85 (TEPV) is involved in Mg(2+) ion dislocation from EF-Tu.

The protein belongs to the EF-Ts family.

It localises to the cytoplasm. In terms of biological role, associates with the EF-Tu.GDP complex and induces the exchange of GDP to GTP. It remains bound to the aminoacyl-tRNA.EF-Tu.GTP complex up to the GTP hydrolysis stage on the ribosome. The protein is Elongation factor Ts of Cytophaga hutchinsonii (strain ATCC 33406 / DSM 1761 / CIP 103989 / NBRC 15051 / NCIMB 9469 / D465).